The following is a 177-amino-acid chain: MRCPYCGGSETQVKDSRPSEDGAAIRRRRVCPDCAGRFTTFERVQLREVVVLKRSGKRVPFDRDKLQRSIDVALRKRAVDPERIERLVSGITRQLESAGEPEVTSEAIGELVMAGLKGLDDVAYVRFASVYKNFREARDFEELLGTLSDGMPVPAAAPEAEGDPEPEASGRRRAGRP.

A zinc finger lies at 3–34 (CPYCGGSETQVKDSRPSEDGAAIRRRRVCPDC). One can recognise an ATP-cone domain in the interval 49-139 (VVVLKRSGKR…VYKNFREARD (91 aa)). The tract at residues 148 to 177 (SDGMPVPAAAPEAEGDPEPEASGRRRAGRP) is disordered.

Belongs to the NrdR family. The cofactor is Zn(2+).

Functionally, negatively regulates transcription of bacterial ribonucleotide reductase nrd genes and operons by binding to NrdR-boxes. The protein is Transcriptional repressor NrdR of Methylobacterium radiotolerans (strain ATCC 27329 / DSM 1819 / JCM 2831 / NBRC 15690 / NCIMB 10815 / 0-1).